A 297-amino-acid chain; its full sequence is MRIAVIGAGKWGSALHLALKENHNCFISSLHQRDLEDFVSIKEALECEYLVFALSSQGMRAWLKENFINKGQKILIASKGIEDQSCQFLDEIFLDFVPKENFCVLSGPSFAAEVMQKLPTALMISGINQELCKKFASFFPDFIKTYIDNDVRGAEICGAYKNVLAIASGISDGLKLGNNARAALISRGLIEMHRFGKFFGTKEETFLGLSGAGDLFLTATSVLSRNYRVGLKLAQNQKLDSILAELNEVAEGVKTAYAIEKLAKMKGIYTPIVNEVVAIFKGKSVQEATQNLLKQND.

3 residues coordinate NADPH: tryptophan 11, arginine 33, and lysine 79. The sn-glycerol 3-phosphate site is built by lysine 79, glycine 107, and serine 109. Alanine 111 lines the NADPH pocket. Residues lysine 161, aspartate 214, serine 224, arginine 225, and asparagine 226 each contribute to the sn-glycerol 3-phosphate site. Lysine 161 functions as the Proton acceptor in the catalytic mechanism. Residue arginine 225 participates in NADPH binding. NADPH is bound by residues valine 249 and glutamate 251.

The protein belongs to the NAD-dependent glycerol-3-phosphate dehydrogenase family.

It is found in the cytoplasm. The catalysed reaction is sn-glycerol 3-phosphate + NAD(+) = dihydroxyacetone phosphate + NADH + H(+). The enzyme catalyses sn-glycerol 3-phosphate + NADP(+) = dihydroxyacetone phosphate + NADPH + H(+). Its pathway is membrane lipid metabolism; glycerophospholipid metabolism. Catalyzes the reduction of the glycolytic intermediate dihydroxyacetone phosphate (DHAP) to sn-glycerol 3-phosphate (G3P), the key precursor for phospholipid synthesis. This chain is Glycerol-3-phosphate dehydrogenase [NAD(P)+], found in Campylobacter jejuni subsp. jejuni serotype O:2 (strain ATCC 700819 / NCTC 11168).